A 94-amino-acid polypeptide reads, in one-letter code: DNA-directed RNA polymerase subunit omega (94 aa).

This sequence belongs to the RNA polymerase subunit omega family. As to quaternary structure, the RNAP catalytic core consists of 2 alpha, 1 beta, 1 beta' and 1 omega subunit. When a sigma factor is associated with the core the holoenzyme is formed, which can initiate transcription.

It carries out the reaction RNA(n) + a ribonucleoside 5'-triphosphate = RNA(n+1) + diphosphate. Its function is as follows. Promotes RNA polymerase assembly. Latches the N- and C-terminal regions of the beta' subunit thereby facilitating its interaction with the beta and alpha subunits. In Bifidobacterium longum subsp. infantis (strain ATCC 15697 / DSM 20088 / JCM 1222 / NCTC 11817 / S12), this protein is DNA-directed RNA polymerase subunit omega.